A 775-amino-acid chain; its full sequence is Ribonucleoside-diphosphate reductase large subunit (775 aa).

Substrate-binding positions include Thr200, 215-216, Gly246, 427-431, and 606-610; these read SC, NLCTE, and PTVSS. Cys216 and Cys444 form a disulfide bridge. The active-site Proton acceptor is the Asn427. The Cysteine radical intermediate role is filled by Cys429. The active-site Proton acceptor is the Glu431.

This sequence belongs to the ribonucleoside diphosphate reductase large chain family. As to quaternary structure, heterotetramer composed of a homodimer of the large subunit (R1) and a homodimer of the small subunit (R2). Larger multisubunit protein complex are also active, composed of (R1)n(R2)n.

The enzyme catalyses a 2'-deoxyribonucleoside 5'-diphosphate + [thioredoxin]-disulfide + H2O = a ribonucleoside 5'-diphosphate + [thioredoxin]-dithiol. Ribonucleoside-diphosphate reductase holoenzyme provides the precursors necessary for viral DNA synthesis. Allows virus growth in non-dividing cells, as well as reactivation from latency in infected hosts. Catalyzes the biosynthesis of deoxyribonucleotides from the corresponding ribonucleotides. The chain is Ribonucleoside-diphosphate reductase large subunit from Homo sapiens (Human).